We begin with the raw amino-acid sequence, 107 residues long: Histone H4 (107 aa).

The segment covering 1–16 (MPGRGKGGKGGKGYGK) has biased composition (gly residues). The segment at 1–23 (MPGRGKGGKGGKGYGKVGAKRHA) is disordered. Residues 17–21 (VGAKR) mediate DNA binding.

It belongs to the histone H4 family. As to quaternary structure, the nucleosome is a histone octamer containing two molecules each of H2A, H2B, H3 and H4 assembled in one H3-H4 heterotetramer and two H2A-H2B heterodimers. The octamer wraps approximately 147 bp of DNA.

The protein resides in the nucleus. It localises to the chromosome. In terms of biological role, core component of nucleosome. Nucleosomes wrap and compact DNA into chromatin, limiting DNA accessibility to the cellular machineries which require DNA as a template. Histones thereby play a central role in transcription regulation, DNA repair, DNA replication and chromosomal stability. DNA accessibility is regulated via a complex set of post-translational modifications of histones, also called histone code, and nucleosome remodeling. This chain is Histone H4, found in Euplotes crassus.